Consider the following 982-residue polypeptide: Mineralocorticoid receptor (982 aa).

A modulating region spans residues 1–601 (METKGYHSLP…STGSSRPSKI (601 aa)). Positions 230 to 242 (QGTPLTCSPNVEN) are enriched in polar residues. Disordered stretches follow at residues 230 to 328 (QGTP…AAST) and 345 to 375 (SGTS…PFPK). Phosphoserine is present on residues S249, S258, S282, S286, and S298. A compositionally biased stretch (low complexity) spans 258–299 (SPLSSPLSSMKSSISSPPSHCSVKSPVSSPNNVTPRSSVSSP). A compositionally biased stretch (polar residues) spans 300–328 (ANINNSRCSVSSPSNTNNRSTLSSPAAST). Low complexity predominate over residues 345–354 (SGTSAGSSTS). Zn(2+) is bound by residues C602, C605, C619, C622, C638, C644, C654, and C657. 2 consecutive NR C4-type zinc fingers follow at residues 602–622 (CLVC…CGSC) and 638–662 (CAGR…LQKC). Positions 602–667 (CLVCGDEASG…RLQKCLQAGM (66 aa)) form a DNA-binding region, nuclear receptor. Positions 668–723 (NLGARRSKKLGKLKGIHEEQPQQQPPPPPPPPQSPEEGTTYIAPAKEPSVNTALVP) are hinge. Positions 682 to 708 (GIHEEQPQQQPPPPPPPPQSPEEGTTY) are disordered. Pro residues predominate over residues 690-701 (QQPPPPPPPPQS). Residues 724–962 (QLSAISRALT…EFPAMLVEII (239 aa)) form the NR LBD domain. N768 and Q774 together coordinate 21-hydroxyprogesterone. Residues N768 and Q774 each coordinate aldosterone. Residues N768 and Q774 each contribute to the progesterone site. The interval 780 to 783 (KWAK) is important for coactivator binding. 2 residues coordinate 21-hydroxyprogesterone: R815 and T943. R815 and T943 together coordinate aldosterone. 2 residues coordinate progesterone: R815 and T943.

It belongs to the nuclear hormone receptor family. NR3 subfamily. In terms of processing, phosphorylated. As to expression, expressed in hippocampus, being restricted to the more superficial cortical layers.

It is found in the cytoplasm. It localises to the nucleus. Functionally, receptor for both mineralocorticoids (MC) such as aldosterone and glucocorticoids (GC) such as corticosterone or cortisol. Binds to mineralocorticoid response elements (MRE) and transactivates target genes. The effect of MC is to increase ion and water transport and thus raise extracellular fluid volume and blood pressure and lower potassium levels. The protein is Mineralocorticoid receptor (NR3C2) of Saimiri sciureus (Common squirrel monkey).